Here is a 911-residue protein sequence, read N- to C-terminus: MAARVAAAVAAALLAAALLLPGAAAEWTLTKKGTVVSYDERSLMIDGKRDLFFSGAIHYPRSPPEMWDKLVKTAKMGGLNTIETYVFWNGHEPEPGKYYFEGRFDLIRFLNVIKDNDMYAIVRIGPFIQAEWNHGGLPYWLREIGHIIFRANNEPFKREMEKFVRFIVQKLKDAEMFAPQGGPIILSQIENEYGNIKKDRKVEGDKYLEWAAEMAISTGIGVPWVMCKQSIAPGEVIPTCNGRHCGDTWTLLDKNKPRLWTENWTAQFRTFGDQLAQRSAEDIAYAVLRFFAKGGTLVNYYMYHGGTNFGRTGASYVLTGYYDEAPMDEYGMCKEPKFGHLRDLHNVIKSYHKAFLWGKQSFEILGHGYEAHNYELPEDKLCLSFLSNNNTGEDGTVVFRGEKFYVPSRSVSILADCKTVVYNTKRVFVQHSERSFHTTDETSKNNVWEMYSEAIPKFRKTKVRTKQPLEQYNQTKDTSDYLWYTTSFRLESDDLPFRRDIRPVIQIKSTAHAMIGFANDAFVGTGRGSKREKSFVFEKPMDLRVGINHIAMLSSSMGMKDSGGELVEVKGGIQDCVVQGLNTGTLDLQGNGWGHKARLEGEDKEIYTEKGMAQFQWKPAENDLPITWYKRYFDEPDGDDPIVVDMSSMSKGMIYVNGEGIGRYWTSFITLAGHPSQSVYHIPRAFLKPKGNLLIIFEEELGKPGGILIQTVRRDDICVFISEHNPAQIKTWESDGGQIKLIAEDTSTRGTLNCPPKRTIQEVVFASFGNPEGACGNFTAGTCHTPDAKAIVEKECLGKESCVLPVVNTVYGADINCPATTATLAVQLLLASHVMRIAICVRPMLFARNGIVTSVLAHILGHPEWDRKSLRVKMAGRQNPCPDFTPTKSYGYLFSKPLVALTVSLDSNLSP.

The N-terminal stretch at 1–25 (MAARVAAAVAAALLAAALLLPGAAA) is a signal peptide. The Proton donor role is filled by Glu-192. Glu-262 (nucleophile) is an active-site residue. 4 N-linked (GlcNAc...) asparagine glycosylation sites follow: Asn-263, Asn-389, Asn-473, and Asn-777. One can recognise an SUEL-type lectin domain in the interval 744–831 (EDTSTRGTLN…ATLAVQLLLA (88 aa)).

Belongs to the glycosyl hydrolase 35 family.

The protein resides in the secreted. It is found in the extracellular space. The protein localises to the apoplast. It carries out the reaction Hydrolysis of terminal non-reducing beta-D-galactose residues in beta-D-galactosides.. The protein is Beta-galactosidase 12 of Oryza sativa subsp. japonica (Rice).